Reading from the N-terminus, the 861-residue chain is DNA topoisomerase 1 (861 aa).

Residues 3 to 141 form the Toprim domain; sequence KSLVIVESPA…KFSRVVFNEI (139 aa). Glu-9 and Asp-110 together coordinate Mg(2+). Residues 157–572 enclose the Topo IA-type catalytic domain; it reads NMNRVHAQQA…DFFKKFSEQL (416 aa). Residues 191–196 are interaction with DNA; the sequence is SAGRVQ. The active-site O-(5'-phospho-DNA)-tyrosine intermediate is the Tyr-318. C4-type zinc fingers lie at residues 596–628, 658–685, and 707–732; these read CPIC…KKRC, CDIC…NPSC, and CEKC…NKIC.

It belongs to the type IA topoisomerase family. As to quaternary structure, monomer. Mg(2+) serves as cofactor.

The catalysed reaction is ATP-independent breakage of single-stranded DNA, followed by passage and rejoining.. In terms of biological role, releases the supercoiling and torsional tension of DNA, which is introduced during the DNA replication and transcription, by transiently cleaving and rejoining one strand of the DNA duplex. Introduces a single-strand break via transesterification at a target site in duplex DNA. The scissile phosphodiester is attacked by the catalytic tyrosine of the enzyme, resulting in the formation of a DNA-(5'-phosphotyrosyl)-enzyme intermediate and the expulsion of a 3'-OH DNA strand. The free DNA strand then undergoes passage around the unbroken strand, thus removing DNA supercoils. Finally, in the religation step, the DNA 3'-OH attacks the covalent intermediate to expel the active-site tyrosine and restore the DNA phosphodiester backbone. The chain is DNA topoisomerase 1 from Buchnera aphidicola subsp. Acyrthosiphon pisum (strain APS) (Acyrthosiphon pisum symbiotic bacterium).